The chain runs to 294 residues: Mitochondrial substrate carrier family protein ucpB (294 aa).

Residues 1 to 10 (MTSQESIGIK) are Mitochondrial intermembrane-facing. Solcar repeat units lie at residues 9 to 93 (IKFL…IKNY), 101 to 187 (TNLL…IKHM), and 197 to 288 (DGLQ…LRKV). Residues 11 to 31 (FLFGGLSCMGAAVVSNPVDVL) form a helical membrane-spanning segment. At 32–67 (KTRFQIHGEGIDSKSLGLVNGTIKIIKNEGISAMYK) the chain is on the mitochondrial matrix side. A helical membrane pass occupies residues 68–88 (GLTPSLLREATYSTLRMGGYD). Topologically, residues 89 to 106 (VIKNYFIDSNGKTNLLSK) are mitochondrial intermembrane. The chain crosses the membrane as a helical span at residues 107-127 (VTSGALSGALGACITSPTDLI). Topologically, residues 128–161 (KVRMQASSKGVKYDSISSAFKEIIAKEGIKGLWK) are mitochondrial matrix. The chain crosses the membrane as a helical span at residues 162 to 182 (GVGPTTQRAALLTASQIPSYD). Residues 183 to 192 (HIKHMILDHG) are Mitochondrial intermembrane-facing. A helical membrane pass occupies residues 193 to 213 (IIQVDGLQVHIVSSIFAGLIA). The Mitochondrial matrix portion of the chain corresponds to 214–267 (SITTSPVDLVKTRIMNQPFDSNGVGLIYKSSYDCFKKTFQSEGISGLYKGFLPN). The helical transmembrane segment at 268-285 (WFRIGPHTIVTFILYEYL) threads the bilayer. Residues 286–294 (RKVSGIKPI) lie on the Mitochondrial intermembrane side of the membrane.

The protein belongs to the mitochondrial carrier (TC 2.A.29) family.

The protein resides in the mitochondrion inner membrane. Mitochondrial solute carriers shuttle metabolites, nucleotides, and cofactors through the mitochondrial inner membrane. The polypeptide is Mitochondrial substrate carrier family protein ucpB (ucpB) (Dictyostelium discoideum (Social amoeba)).